A 1085-amino-acid polypeptide reads, in one-letter code: Translation factor GUF1 homolog, mitochondrial (1085 aa).

A tr-type G domain is found at Lys232–Ile409. Residues Ala241–Ser248, Asp302–His306, and Asn356–Asp359 each bind GTP.

This sequence belongs to the TRAFAC class translation factor GTPase superfamily. Classic translation factor GTPase family. LepA subfamily.

The protein localises to the mitochondrion inner membrane. It carries out the reaction GTP + H2O = GDP + phosphate + H(+). Promotes mitochondrial protein synthesis. May act as a fidelity factor of the translation reaction, by catalyzing a one-codon backward translocation of tRNAs on improperly translocated ribosomes. Binds to mitochondrial ribosomes in a GTP-dependent manner. This chain is Translation factor GUF1 homolog, mitochondrial, found in Plasmodium falciparum (isolate 3D7).